Consider the following 164-residue polypeptide: CDP-archaeol synthase (164 aa).

Helical transmembrane passes span 3–23 (LLYF…AVLA), 51–71 (YEGF…PNLL), 77–97 (LLDA…GAFI), and 122–142 (LAVY…AVII).

The protein belongs to the CDP-archaeol synthase family. Requires Mg(2+) as cofactor.

The protein resides in the cell membrane. The enzyme catalyses 2,3-bis-O-(geranylgeranyl)-sn-glycerol 1-phosphate + CTP + H(+) = CDP-2,3-bis-O-(geranylgeranyl)-sn-glycerol + diphosphate. Its pathway is membrane lipid metabolism; glycerophospholipid metabolism. Its function is as follows. Catalyzes the formation of CDP-2,3-bis-(O-geranylgeranyl)-sn-glycerol (CDP-archaeol) from 2,3-bis-(O-geranylgeranyl)-sn-glycerol 1-phosphate (DGGGP) and CTP. This reaction is the third ether-bond-formation step in the biosynthesis of archaeal membrane lipids. The chain is CDP-archaeol synthase from Pyrobaculum islandicum (strain DSM 4184 / JCM 9189 / GEO3).